Here is a 364-residue protein sequence, read N- to C-terminus: Peptide chain release factor 1 (364 aa).

An N5-methylglutamine modification is found at Gln-230.

The protein belongs to the prokaryotic/mitochondrial release factor family. Methylated by PrmC. Methylation increases the termination efficiency of RF1.

Its subcellular location is the cytoplasm. Peptide chain release factor 1 directs the termination of translation in response to the peptide chain termination codons UAG and UAA. This is Peptide chain release factor 1 from Acidothermus cellulolyticus (strain ATCC 43068 / DSM 8971 / 11B).